Reading from the N-terminus, the 885-residue chain is Translation initiation factor IF-2 (885 aa).

Residues 1-295 (MTDNKDDKTI…EKFKRSQMQE (295 aa)) are disordered. Residues 63 to 77 (PVAAAPAAARPAEQR) are compositionally biased toward low complexity. Residues 78–94 (PMPPQPSGRPAPQPQPH) are compositionally biased toward pro residues. A compositionally biased stretch (basic and acidic residues) spans 130–183 (RDAEEAKRRAEEEVRRRREEEERIAREKEEAARRAAEEAARPAVEAEKVEEKVE). Residues 184-201 (AATPAVAETRPLSERPAP) are compositionally biased toward low complexity. A tr-type G domain is found at 383 to 550 (ARPPIVTIMG…AILLQSEILD (168 aa)). Positions 392–399 (GHVDHGKT) are G1. Position 392–399 (392–399 (GHVDHGKT)) interacts with GTP. The segment at 417-421 (GITQH) is G2. The segment at 438–441 (DTPG) is G3. GTP contacts are provided by residues 438–442 (DTPGH) and 492–495 (NKID). Positions 492–495 (NKID) are G4. The tract at residues 528 to 530 (SAK) is G5.

It belongs to the TRAFAC class translation factor GTPase superfamily. Classic translation factor GTPase family. IF-2 subfamily.

The protein localises to the cytoplasm. Functionally, one of the essential components for the initiation of protein synthesis. Protects formylmethionyl-tRNA from spontaneous hydrolysis and promotes its binding to the 30S ribosomal subunits. Also involved in the hydrolysis of GTP during the formation of the 70S ribosomal complex. The protein is Translation initiation factor IF-2 of Sinorhizobium medicae (strain WSM419) (Ensifer medicae).